The sequence spans 291 residues: F-box/kelch-repeat protein At5g38670 (291 aa).

The 47-residue stretch at 5 to 51 (TNPNPSLPDDLILSCVARVSRLYYPALSLVSKSFRSLIASPELYKTR) folds into the F-box domain. 4 Kelch repeats span residues 46-91 (ELYK…VLDE), 92-140 (KIYV…RFDG), 142-187 (LHLV…WYTI), and 189-232 (KGDI…YGGK).

The sequence is that of F-box/kelch-repeat protein At5g38670 from Arabidopsis thaliana (Mouse-ear cress).